We begin with the raw amino-acid sequence, 172 residues long: MHCPYCRNTDTRVLDSRVADDGGSIRRRRTCSACAKRFTTVELMQLTVLKRSGASEPFTREKAVAGVRKACKGRPVTEDQLACLGQAVEDALRLDGAAEVPAHEVGLAILGPLRELDEVAYLRFASVYRAFESADDFEDEIAMLRAERPAVAIEPVTVPATEPAPPQPVATG.

A zinc finger spans residues 3–34 (CPYCRNTDTRVLDSRVADDGGSIRRRRTCSAC). The ATP-cone domain occupies 46–136 (LTVLKRSGAS…VYRAFESADD (91 aa)).

This sequence belongs to the NrdR family. Requires Zn(2+) as cofactor.

Its function is as follows. Negatively regulates transcription of bacterial ribonucleotide reductase nrd genes and operons by binding to NrdR-boxes. This Nocardioides sp. (strain ATCC BAA-499 / JS614) protein is Transcriptional repressor NrdR.